The primary structure comprises 339 residues: Protein LicA (339 aa).

Tandem repeats lie at residues 4–7 (INQS), 8–11 (INQS), 12–15 (INQS), 16–19 (INQS), 20–23 (INQS), 24–27 (INQS), 28–31 (INQS), 32–35 (INQS), and 36–39 (INQS). The segment at 4–39 (INQSINQSINQSINQSINQSINQSINQSINQSINQS) is 9 X 4 AA tandem repeats of I-N-Q-S.

Belongs to the peptidase S49 family.

Mediates phase variation of the LOS 6A2 and 12D9 epitopes. Phase variation of H.influenza LOS epitopes expressed by LicA is determined by a translational switch. This is Protein LicA (licA) from Haemophilus influenzae.